The chain runs to 262 residues: PsbP domain-containing protein 6, chloroplastic (262 aa).

A disulfide bridge connects residues cysteine 128 and cysteine 132.

It belongs to the PsbP family.

The protein localises to the plastid. The protein resides in the chloroplast thylakoid lumen. In terms of biological role, may be involved in the redox regulation of photosystem II. The chain is PsbP domain-containing protein 6, chloroplastic (PPD6) from Arabidopsis thaliana (Mouse-ear cress).